The chain runs to 80 residues: Clavanin-C (80 aa).

An N-terminal signal peptide occupies residues 1 to 19 (MKTTILILLILGLGINAKS). Positions 20–29 (LEERKSEEEK) are excised as a propeptide. Phenylalanine amide is present on Phe-52. Positions 54–80 (DDQQDNGKFYGHYAEDNGKHWYDTGDQ) are excised as a propeptide.

In terms of tissue distribution, hemocytes and pharyngeal tissues.

Its subcellular location is the secreted. Functionally, has antimicrobial activity against E.coli, L.monocytogenes and C.albicans. In Styela clava (Sea squirt), this protein is Clavanin-C.